The primary structure comprises 920 residues: WD repeat-containing protein 47 (920 aa).

Residues 10–42 form the LisH domain; sequence KEVEIIKLILDFLNSKKLHISMLALEKESGVIN. The CTLH domain maps to 45 to 102; it reads FSDDMLFLRQLILDGQWDEVLQFIQPLECMEKFDKKRFRYIILKQKFLEALCVNNAMS. Threonine 285 is modified (phosphothreonine). Phosphoserine occurs at positions 289, 292, 297, and 312. A compositionally biased stretch (basic and acidic residues) spans 371 to 380; the sequence is YEESPERSDT. Positions 371-422 are disordered; the sequence is YEESPERSDTPVEAQQPVSSEAMCQGSGLEKEPANGAQNPVPAKQEKNELRD. Serine 423 bears the Phosphoserine mark. Positions 501–594 are disordered; it reads LNQQCSGSKN…RSKGEEDDKS (94 aa). Low complexity predominate over residues 506–523; the sequence is SGSKNNGSNNSSVTSFST. Residues 538 to 552 show a composition bias toward polar residues; it reads NIHTSTPRNPGSTNH. At threonine 543 the chain carries Phosphothreonine. 7 WD repeats span residues 605–644, 660–699, 707–749, 754–792, 799–838, 841–880, and 887–919; these read EDTQAVRAVAFHPSGSLYAVGSNSKTLRVCAYPEKMDASA, HHKGSIYCVAWSPCGQLLATGSNDKYVKVLPFNAETCNAT, MHDG…GQGL, GHTGHILALYTWSGWMIASGSQDKTVRFWDLRVPSCVRV, GTGSAVASVAVDPSGRLLATGQEDSSCMLYDIRGGRMVQS, PHSSDVRSVRFSPGAHYLLTGSYDMKIKVTDLQGDLTKQL, and EHKDKVIQCRWHTQDLSFLSSSADRTVTLWTYS.

In terms of assembly, interacts with MAP1S (via WD repeats). In terms of tissue distribution, enriched in the nervous system (at protein level).

The protein localises to the cytoplasm. Its subcellular location is the cytoskeleton. This chain is WD repeat-containing protein 47 (Wdr47), found in Mus musculus (Mouse).